A 744-amino-acid polypeptide reads, in one-letter code: Palmitoyltransferase ZDHHC5-A (744 aa).

Residues 1-11 (MPSGSMSGGVS) show a composition bias toward gly residues. The segment at 1-25 (MPSGSMSGGVSGPTSPPHPTVPSRP) is disordered. The Cytoplasmic segment spans residues 1-30 (MPSGSMSGGVSGPTSPPHPTVPSRPLRPSR). The chain crosses the membrane as a helical span at residues 31 to 51 (YVPVSAATAFLVGSTTLFFCF). Residues 52-61 (TCPWLSEQFS) lie on the Extracellular side of the membrane. A helical transmembrane segment spans residues 62–82 (VAVPIYNGVMFMFVLANFCMA). Residues 83 to 167 (TFMDPGIFPR…IGRRNYRYFF (85 aa)) lie on the Cytoplasmic side of the membrane. In terms of domain architecture, DHHC spans 121-171 (KWCSTCRFYRPPRCSHCSVCDNCVEDFDHHCPWVNNCIGRRNYRYFFLFLL). C151 serves as the catalytic S-palmitoyl cysteine intermediate. The chain crosses the membrane as a helical span at residues 168-188 (LFLLSLTAHIMGVFGFGLLFI). Over 189-208 (LYHTQQLDRVHSAVTMAVMC) the chain is Extracellular. A helical transmembrane segment spans residues 209–229 (VAGLFFIPVAGLTGFHVVLVA). At 230–744 (RGRTTNEQVT…VGGTTYEISV (515 aa)) the chain is on the cytoplasmic side. Disordered regions lie at residues 314-523 (SLEM…PVVG), 556-645 (QHAV…SLSY), and 664-744 (SVAG…EISV). The segment covering 369–393 (TYSSPGKNHTALTHAYANQSSQQPG) has biased composition (polar residues). Positions 398-413 (PSLDGREGGGAERSGA) are enriched in basic and acidic residues. The span at 415 to 428 (RTGGGPGGPPGSGI) shows a compositional bias: gly residues. Polar residues predominate over residues 460-501 (THNAPPSEATTSTSYKSLANQTPPQAARNGSLSYDSLLTPSE). Residues 571–584 (PERERERLLHDSQA) are compositionally biased toward basic and acidic residues. Residues 585–601 (QHHHHHHHHHHHHRPPR) show a composition bias toward basic residues. 2 stretches are compositionally biased toward low complexity: residues 621-630 (RTRSTDTTHP) and 689-723 (PKPS…SPAH). Positions 725-737 (PGGGVKKVTGVGG) are enriched in gly residues.

Belongs to the DHHC palmitoyltransferase family. ERF2/ZDHHC9 subfamily.

Its subcellular location is the cell membrane. The catalysed reaction is L-cysteinyl-[protein] + hexadecanoyl-CoA = S-hexadecanoyl-L-cysteinyl-[protein] + CoA. Its function is as follows. Palmitoyltransferase that catalyzes the addition of palmitate onto various protein substrates and is involved in a variety of cellular processes. The protein is Palmitoyltransferase ZDHHC5-A of Danio rerio (Zebrafish).